We begin with the raw amino-acid sequence, 612 residues long: Transcription factor unc-37 (612 aa).

Positions 143–228 (FASPHVNGGD…SNSRARQQQQ (86 aa)) are disordered. Over residues 150–159 (GGDGAGGSSG) the composition is skewed to gly residues. The tract at residues 153 to 196 (GAGGSSGGASEAKKAKLEDPDDGELEIDVTNDDHPSTASNGGAA) is CCN domain. A compositionally biased stretch (acidic residues) spans 171–182 (DPDDGELEIDVT). The span at 202–221 (DSTNSVASSGASTPSIASNS) shows a compositional bias: polar residues. WD repeat units follow at residues 308–339 (GIPTGLKKKMELNHGEVVCAATISRDNSRVYT), 372–402 (LKENYIRSCKLFEDGNTLLIGGEASTVALWD), 414–444 (TDSQACYALAMSPDEKLLFACLADGNILIYD), 456–486 (GHQDGASCLDLSKDGTKLWSGGLDNSVRCWD), 538–568 (QHESCVLSLKFAHSGKFFISTGKDNALNAWR), and 579–609 (KENSSVLSCDISFDDSLIVTGSGEKKATLYA).

Belongs to the WD repeat Groucho/TLE family. In terms of assembly, interacts with unc-4. Interacts with ref-1. May interact with mls-1.

It is found in the nucleus. Its function is as follows. Transcriptional corepressor that functions with the neural specificity gene unc-4 to govern motor neuron identity. In concert with unc-4, represses the expression of VB-specific genes such as ceh-12, thereby preventing the adoption of VB motor neuron fate. May function with transcription factor mls-1 to promote uterine muscle specification and formation. This is Transcription factor unc-37 (unc-37) from Caenorhabditis elegans.